A 496-amino-acid chain; its full sequence is Glutamate--cysteine ligase B, chloroplastic (496 aa).

A chloroplast-targeting transit peptide spans 1–34 (MAVASRLAVARVAPDGGAAGRRRRRRGRPVVAVP). Positions 14–53 (PDGGAAGRRRRRRGRPVVAVPTAAGRGRGRGGAVAASPPT) are disordered. The segment covering 29–38 (PVVAVPTAAG) has biased composition (low complexity). Cysteine 160 and cysteine 380 form a disulfide bridge.

Belongs to the carboxylate-amine ligase family. Glutamate--cysteine ligase type 2 subfamily. Homodimer or monomer when oxidized or reduced, respectively. The Cys-160-Cys-380 disulfide bridge is known to modulate the enzyme activity according to the redox status. The oxidized form constitutes the active enzyme.

Its subcellular location is the plastid. It localises to the chloroplast. It carries out the reaction L-cysteine + L-glutamate + ATP = gamma-L-glutamyl-L-cysteine + ADP + phosphate + H(+). It participates in sulfur metabolism; glutathione biosynthesis; glutathione from L-cysteine and L-glutamate: step 1/2. The protein is Glutamate--cysteine ligase B, chloroplastic (GSH1-2) of Oryza sativa subsp. japonica (Rice).